Consider the following 318-residue polypeptide: COP9 signalosome complex subunit 6 (318 aa).

Positions 32–165 (VALHPLVILN…VSVYESVIDI (134 aa)) constitute an MPN domain.

It belongs to the peptidase M67A family. CSN6 subfamily. As to quaternary structure, component of the CSN complex, probably composed of cops1, cops2, cops3, cops4, cops5, cops6, cops7, cops8 and cops9.

Its subcellular location is the cytoplasm. It is found in the nucleus. Functionally, component of the COP9 signalosome complex (CSN), a complex involved in various cellular and developmental processes. The CSN complex is an essential regulator of the ubiquitin (Ubl) conjugation pathway by mediating the deneddylation of the cullin subunits of E3 ligase complexes, leading to modify the Ubl ligase activity. In Xenopus laevis (African clawed frog), this protein is COP9 signalosome complex subunit 6 (cops6).